A 468-amino-acid chain; its full sequence is Aldehyde dehydrogenase family 3 member B1 (468 aa).

An N-acetylmethionine modification is found at methionine 1. 188–193 (GSPRVG) contacts NAD(+). Catalysis depends on residues glutamate 210 and cysteine 244. A lipid anchor (S-palmitoyl cysteine) is attached at cysteine 463. Cysteine 465 carries the cysteine methyl ester modification. A lipid anchor (S-geranylgeranyl cysteine) is attached at cysteine 465. Residues 466–468 (TLL) constitute a propeptide, removed in mature form.

Belongs to the aldehyde dehydrogenase family. Dually lipidated in the C-terminus; prenylation occurs prior to, and is a prerequisite for palmitoylation. It is also required for activity towards long-chain substrates. As to expression, highest expression in kidney and lung.

The protein resides in the cell membrane. The catalysed reaction is an aldehyde + NADP(+) + H2O = a carboxylate + NADPH + 2 H(+). The enzyme catalyses an aldehyde + NAD(+) + H2O = a carboxylate + NADH + 2 H(+). It catalyses the reaction a long-chain fatty aldehyde + NAD(+) + H2O = a long-chain fatty acid + NADH + 2 H(+). It carries out the reaction a medium-chain fatty aldehyde + NAD(+) + H2O = a medium-chain fatty acid + NADH + 2 H(+). The catalysed reaction is octanal + NAD(+) + H2O = octanoate + NADH + 2 H(+). The enzyme catalyses nonanal + NAD(+) + H2O = nonanoate + NADH + 2 H(+). It catalyses the reaction hexadecanoate + NADH + 2 H(+) = hexadecanal + NAD(+) + H2O. It carries out the reaction (2E)-octenal + NAD(+) + H2O = (2E)-octenoate + NADH + 2 H(+). The catalysed reaction is (E)-non-2-enal + NAD(+) + H2O = (E)-non-2-enoate + NADH + 2 H(+). The enzyme catalyses (E)-4-hydroxynon-2-enal + NAD(+) + H2O = (E)-4-hydroxynon-2-enoate + NADH + 2 H(+). It catalyses the reaction (2E)-hexadecenal + NAD(+) + H2O = (E)-hexadec-2-enoate + NADH + 2 H(+). It carries out the reaction benzaldehyde + NAD(+) + H2O = benzoate + NADH + 2 H(+). The catalysed reaction is a medium-chain fatty aldehyde + NADP(+) + H2O = a medium-chain fatty acid + NADPH + 2 H(+). The enzyme catalyses hexanal + NADP(+) + H2O = hexanoate + NADPH + 2 H(+). It catalyses the reaction octanal + NADP(+) + H2O = octanoate + NADPH + 2 H(+). It carries out the reaction nonanal + NADP(+) + H2O = nonanoate + NADPH + 2 H(+). The catalysed reaction is (2E)-octenal + NADP(+) + H2O = (2E)-octenoate + NADPH + 2 H(+). The enzyme catalyses (E)-non-2-enal + NADP(+) + H2O = (E)-non-2-enoate + NADPH + 2 H(+). It catalyses the reaction (E)-4-hydroxynon-2-enal + NADP(+) + H2O = (E)-4-hydroxynon-2-enoate + NADPH + 2 H(+). It carries out the reaction benzaldehyde + NADP(+) + H2O = benzoate + NADPH + 2 H(+). It participates in alcohol metabolism; ethanol degradation; acetate from ethanol: step 2/2. Its function is as follows. Oxidizes medium and long chain saturated and unsaturated fatty aldehydes generated in the plasma membrane into non-toxic fatty acids. May have a protective role against the cytotoxicity induced by lipid peroxidation. Short-chain fatty aldehydes are not good substrates. Can use both NADP(+) and NAD(+) as electron acceptor in vitro, however in vivo preference will depend on their tissue levels. Low activity towards acetaldehyde and 3,4-dihydroxyphenylacetaldehyde. Able to metabolize aromatic aldehydes such as benzaldehyde to their acid form. The sequence is that of Aldehyde dehydrogenase family 3 member B1 (ALDH3B1) from Homo sapiens (Human).